Reading from the N-terminus, the 182-residue chain is 3-hydroxyanthranilate 3,4-dioxygenase (182 aa).

Arg-46 is a binding site for O2. His-50, Glu-56, and His-96 together coordinate Fe cation. Glu-56 is a substrate binding site. Substrate-binding residues include Arg-100 and Glu-111. Positions 126, 129, 163, and 166 each coordinate Fe cation.

Belongs to the 3-HAO family. Homodimer. Fe(2+) is required as a cofactor.

The enzyme catalyses 3-hydroxyanthranilate + O2 = (2Z,4Z)-2-amino-3-carboxymuconate 6-semialdehyde. It functions in the pathway cofactor biosynthesis; NAD(+) biosynthesis; quinolinate from L-kynurenine: step 3/3. Functionally, catalyzes the oxidative ring opening of 3-hydroxyanthranilate to 2-amino-3-carboxymuconate semialdehyde, which spontaneously cyclizes to quinolinate. The chain is 3-hydroxyanthranilate 3,4-dioxygenase from Brucella anthropi (strain ATCC 49188 / DSM 6882 / CCUG 24695 / JCM 21032 / LMG 3331 / NBRC 15819 / NCTC 12168 / Alc 37) (Ochrobactrum anthropi).